Reading from the N-terminus, the 184-residue chain is Large ribosomal subunit protein uL5 (184 aa).

It belongs to the universal ribosomal protein uL5 family. In terms of assembly, part of the 50S ribosomal subunit; part of the 5S rRNA/L5/L18/L25 subcomplex. Contacts the 5S rRNA and the P site tRNA. Forms a bridge to the 30S subunit in the 70S ribosome.

Its function is as follows. This is one of the proteins that bind and probably mediate the attachment of the 5S RNA into the large ribosomal subunit, where it forms part of the central protuberance. In the 70S ribosome it contacts protein S13 of the 30S subunit (bridge B1b), connecting the 2 subunits; this bridge is implicated in subunit movement. Contacts the P site tRNA; the 5S rRNA and some of its associated proteins might help stabilize positioning of ribosome-bound tRNAs. The protein is Large ribosomal subunit protein uL5 of Pelagibacter ubique (strain HTCC1062).